The primary structure comprises 431 residues: tRNA-2-methylthio-N(6)-dimethylallyladenosine synthase (431 aa).

The MTTase N-terminal domain occupies 4 to 120 (RAVYIKTFGC…IENIIENQVS (117 aa)). C13, C49, C83, C154, C158, and C161 together coordinate [4Fe-4S] cluster. One can recognise a Radical SAM core domain in the interval 140 to 367 (RKDCVKAWVN…LKLQDEITER (228 aa)). Positions 370 to 430 (KRLEGKIQEV…RHSLEGDIIS (61 aa)) constitute a TRAM domain.

Belongs to the methylthiotransferase family. MiaB subfamily. In terms of assembly, monomer. [4Fe-4S] cluster is required as a cofactor.

The protein resides in the cytoplasm. It carries out the reaction N(6)-dimethylallyladenosine(37) in tRNA + (sulfur carrier)-SH + AH2 + 2 S-adenosyl-L-methionine = 2-methylsulfanyl-N(6)-dimethylallyladenosine(37) in tRNA + (sulfur carrier)-H + 5'-deoxyadenosine + L-methionine + A + S-adenosyl-L-homocysteine + 2 H(+). Catalyzes the methylthiolation of N6-(dimethylallyl)adenosine (i(6)A), leading to the formation of 2-methylthio-N6-(dimethylallyl)adenosine (ms(2)i(6)A) at position 37 in tRNAs that read codons beginning with uridine. This is tRNA-2-methylthio-N(6)-dimethylallyladenosine synthase from Thermodesulfovibrio yellowstonii (strain ATCC 51303 / DSM 11347 / YP87).